A 333-amino-acid polypeptide reads, in one-letter code: Taste receptor type 2 member 123 (333 aa).

Residues 1–13 lie on the Extracellular side of the membrane; it reads MFSQKINYSHLFT. Asn7 carries N-linked (GlcNAc...) asparagine glycosylation. A helical membrane pass occupies residues 14 to 34; sequence FSITLYVEIVTGILGHGFIAL. Residues 35–60 lie on the Cytoplasmic side of the membrane; sequence VNIMDWVKRRRISSVDQILTALALTR. The helical transmembrane segment at 61 to 81 threads the bilayer; that stretch reads FIYVLSMLICILLFMLCPHLP. The Extracellular portion of the chain corresponds to 82–90; it reads RRSEMLSAM. A helical transmembrane segment spans residues 91–111; that stretch reads GIFWVVNSHFSIWLTTCLGVF. Over 112–134 the chain is Cytoplasmic; it reads YFLKIANFSNSFFLYLKWRVKKV. The helical transmembrane segment at 135–155 threads the bilayer; that stretch reads ILIIILASLIFLTLHILSLGI. The Extracellular portion of the chain corresponds to 156–205; that stretch reads YDQFSIAAYVGNMSYSLTDLTQFSSTFLFSNSSNVFLITNSSHVFLPINS. N-linked (GlcNAc...) asparagine glycosylation is found at Asn167, Asn186, and Asn195. Residues 206-226 traverse the membrane as a helical segment; sequence LFMLIPFTVSLVAFLMLIFSL. Residues 227-253 are Cytoplasmic-facing; sequence WKHHKKMQVNAKQPRDVSTMAHIKALQ. A helical transmembrane segment spans residues 254-274; it reads TVFSFLLLYAIYLLFLIIGIL. Over 275–281 the chain is Extracellular; sequence NLGLMEK. Residues 282–302 form a helical membrane-spanning segment; sequence IVILIFDHISGAVFPISHSFV. Residues 303-333 are Cytoplasmic-facing; the sequence is LILGNSKLRQASLSVLPCLRCQSKDMDTMGL.

Belongs to the G-protein coupled receptor T2R family. Expressed in subsets of taste receptor cells of the tongue and palate epithelium and exclusively in gustducin-positive cells. Expressed in the duodenum, antrum and fundus (part of the stomach).

It localises to the membrane. Its function is as follows. Gustducin-coupled receptor implicated in the perception of bitter compounds in the oral cavity and the gastrointestinal tract. Signals through PLCB2 and the calcium-regulated cation channel TRPM5. The protein is Taste receptor type 2 member 123 (Tas2r123) of Mus musculus (Mouse).